We begin with the raw amino-acid sequence, 333 residues long: 4-hydroxythreonine-4-phosphate dehydrogenase (333 aa).

His136 and Thr137 together coordinate substrate. A divalent metal cation is bound by residues His166, His211, and His266. Residues Lys274, Asn283, and Arg292 each contribute to the substrate site.

The protein belongs to the PdxA family. As to quaternary structure, homodimer. Zn(2+) serves as cofactor. It depends on Mg(2+) as a cofactor. The cofactor is Co(2+).

It localises to the cytoplasm. The enzyme catalyses 4-(phosphooxy)-L-threonine + NAD(+) = 3-amino-2-oxopropyl phosphate + CO2 + NADH. It participates in cofactor biosynthesis; pyridoxine 5'-phosphate biosynthesis; pyridoxine 5'-phosphate from D-erythrose 4-phosphate: step 4/5. Catalyzes the NAD(P)-dependent oxidation of 4-(phosphooxy)-L-threonine (HTP) into 2-amino-3-oxo-4-(phosphooxy)butyric acid which spontaneously decarboxylates to form 3-amino-2-oxopropyl phosphate (AHAP). The sequence is that of 4-hydroxythreonine-4-phosphate dehydrogenase from Acidithiobacillus ferrooxidans (strain ATCC 23270 / DSM 14882 / CIP 104768 / NCIMB 8455) (Ferrobacillus ferrooxidans (strain ATCC 23270)).